The chain runs to 132 residues: Interleukin-13 (132 aa).

The signal sequence occupies residues 1–18 (MALLLTMVIALTCLGGFA). N-linked (GlcNAc...) asparagine glycans are attached at residues Asn-38, Asn-49, Asn-57, and Asn-72. Disulfide bonds link Cys-48–Cys-76 and Cys-64–Cys-90.

It belongs to the IL-4/IL-13 family. In terms of assembly, interacts with IL13RA2.

It localises to the secreted. Cytokine that plays important roles in allergic inflammation and immune response to parasite infection. Synergizes with IL2 in regulating interferon-gamma synthesis. Stimulates B-cell proliferation, and activation of eosinophils, basophils, and mast cells. Plays an important role in controlling IL33 activity by modulating the production of transmembrane and soluble forms of interleukin-1 receptor-like 1/IL1RL1. Displays the capacity to antagonize Th1-driven proinflammatory immune response and downregulates synthesis of many proinflammatory cytokines including IL1, IL6, IL10, IL12 and TNF-alpha through a mechanism that partially involves suppression of NF-kappa-B. Also functions on nonhematopoietic cells, including endothelial cells where it induces vascular cell adhesion protein 1/VCAM1, which is important in the recruitment of eosinophils. Exerts its biological effects through its receptors which comprises the IL4R chain and the IL13RA1 chain, to activate JAK1 and TYK2, leading to the activation of STAT6. Aside from IL13RA1, another receptor IL13RA2 acts as a high affinity decoy for IL13 and mediates internalization and depletion of extracellular IL13. The polypeptide is Interleukin-13 (IL13) (Macaca thibetana (Pere David's macaque)).